A 337-amino-acid polypeptide reads, in one-letter code: Ribosomal RNA small subunit methyltransferase H (337 aa).

S-adenosyl-L-methionine contacts are provided by residues 33 to 35, Asp-53, Asp-101, and Gln-108; that span reads AGH.

It belongs to the methyltransferase superfamily. RsmH family.

It is found in the cytoplasm. The enzyme catalyses cytidine(1402) in 16S rRNA + S-adenosyl-L-methionine = N(4)-methylcytidine(1402) in 16S rRNA + S-adenosyl-L-homocysteine + H(+). Its function is as follows. Specifically methylates the N4 position of cytidine in position 1402 (C1402) of 16S rRNA. The protein is Ribosomal RNA small subunit methyltransferase H of Herpetosiphon aurantiacus (strain ATCC 23779 / DSM 785 / 114-95).